We begin with the raw amino-acid sequence, 363 residues long: MAP kinase kinase skh1/pek1 (363 aa).

Positions Ile79–Val343 constitute a Protein kinase domain. ATP is bound by residues Leu85–Val93 and Lys108. Catalysis depends on Asp206, which acts as the Proton acceptor. Ser234 bears the Phosphoserine mark. Position 238 is a phosphothreonine (Thr238).

Belongs to the protein kinase superfamily. STE Ser/Thr protein kinase family. MAP kinase kinase subfamily.

It catalyses the reaction L-seryl-[protein] + ATP = O-phospho-L-seryl-[protein] + ADP + H(+). It carries out the reaction L-threonyl-[protein] + ATP = O-phospho-L-threonyl-[protein] + ADP + H(+). The catalysed reaction is L-tyrosyl-[protein] + ATP = O-phospho-L-tyrosyl-[protein] + ADP + H(+). Its activity is regulated as follows. Activated by mkh1. Involved in the mkh1 signal transduction pathway that plays a role in cell wall integrity. Activates spm1/pmk1 via phosphorylation. The chain is MAP kinase kinase skh1/pek1 (skh1) from Schizosaccharomyces pombe (strain 972 / ATCC 24843) (Fission yeast).